The chain runs to 585 residues: Cyclic nucleotide-binding domain-containing protein 2 (585 aa).

116 to 239 (SYRNYAEPLQ…DAQYRFEFFR (124 aa)) provides a ligand contact to a nucleoside 3',5'-cyclic phosphate.

Its subcellular location is the cytoplasm. It localises to the cytosol. Essential for male fertility. Plays an important role in spermatogenesis and regulates sperm motility by controlling the development of the flagellar bending of sperm. In Macaca fascicularis (Crab-eating macaque), this protein is Cyclic nucleotide-binding domain-containing protein 2 (CNBD2).